A 334-amino-acid polypeptide reads, in one-letter code: N-chimaerin (334 aa).

The segment covering 1-10 (MPSKESWSGR) has biased composition (polar residues). The disordered stretch occupies residues 1-22 (MPSKESWSGRKTNRATVHKSKQ). Phosphothreonine is present on Thr67. The Phorbol-ester/DAG-type zinc-finger motif lies at 80–130 (VHNFKVHTFRGPHWCEYCANFMWGLIAQGVKCADCGLNVHKQCSKMVPNDC). The Rho-GAP domain maps to 143–334 (CDLTTLVKAR…LLIKNEDILF (192 aa)). Position 215 is a phosphothreonine (Thr215).

Interacts with EPHA4; effector of EPHA4 in axon guidance linking EPHA4 activation to RAC1 regulation. Phosphorylated. Phosphorylation is EPHA4 kinase activity-dependent.

In terms of biological role, GTPase-activating protein for p21-rac and a phorbol ester receptor. Involved in the assembly of neuronal locomotor circuits as a direct effector of EPHA4 in axon guidance. The protein is N-chimaerin (CHN1) of Bos taurus (Bovine).